A 252-amino-acid polypeptide reads, in one-letter code: Chaperone protein AggD (252 aa).

A signal peptide spans 1 to 22 (MKIRRIVSTIAIALSVFTFAHA).

Belongs to the periplasmic pilus chaperone family.

The protein localises to the periplasm. Functionally, involved in the biogenesis of the AAF/I fimbriae. The protein is Chaperone protein AggD (aggD) of Escherichia coli.